A 326-amino-acid chain; its full sequence is Probable iron chelatin transport system permease protein HP_0889 (326 aa).

The next 10 membrane-spanning stretches (helical) occupy residues 7 to 27 (IALACVILAVVVLLFGGESLS), 64 to 84 (ILALLVGASLSGSGVVMQTIF), 91 to 111 (PFLLGISSGAMLGVAMAIAVV), 113 to 133 (SNIAILAFFGAILASLAVLAM), 142 to 162 (LSLVLSGVVLSAFLSALAGAI), 164 to 184 (FFVIPQKAQAIVVWLLGSLSL), 187 to 207 (YKDCLIAFIGLSLGFIPLFLL), 241 to 261 (VASALAVSVSGTIGWIGLVIP), 275 to 295 (LLLSSLLMGAFFLLLADVVAK), and 301 to 321 (DLPVGIATSVLGAPFFLWLLF).

Belongs to the binding-protein-dependent transport system permease family. FecCD subfamily.

It is found in the cell inner membrane. In terms of biological role, part of a binding-protein-dependent transport system for an iron chelatin; probably responsible for the translocation of the substrate across the membrane. The sequence is that of Probable iron chelatin transport system permease protein HP_0889 from Helicobacter pylori (strain ATCC 700392 / 26695) (Campylobacter pylori).